We begin with the raw amino-acid sequence, 224 residues long: Phosphoribosylformylglycinamidine synthase subunit PurQ (224 aa).

Positions 2–224 constitute a Glutamine amidotransferase type-1 domain; that stretch reads KFAVIQFPGS…SILNHAEVKA (223 aa). The Nucleophile role is filled by cysteine 86. Active-site residues include histidine 195 and glutamate 197.

As to quaternary structure, part of the FGAM synthase complex composed of 1 PurL, 1 PurQ and 2 PurS subunits.

It localises to the cytoplasm. The enzyme catalyses N(2)-formyl-N(1)-(5-phospho-beta-D-ribosyl)glycinamide + L-glutamine + ATP + H2O = 2-formamido-N(1)-(5-O-phospho-beta-D-ribosyl)acetamidine + L-glutamate + ADP + phosphate + H(+). The catalysed reaction is L-glutamine + H2O = L-glutamate + NH4(+). The protein operates within purine metabolism; IMP biosynthesis via de novo pathway; 5-amino-1-(5-phospho-D-ribosyl)imidazole from N(2)-formyl-N(1)-(5-phospho-D-ribosyl)glycinamide: step 1/2. Its function is as follows. Part of the phosphoribosylformylglycinamidine synthase complex involved in the purines biosynthetic pathway. Catalyzes the ATP-dependent conversion of formylglycinamide ribonucleotide (FGAR) and glutamine to yield formylglycinamidine ribonucleotide (FGAM) and glutamate. The FGAM synthase complex is composed of three subunits. PurQ produces an ammonia molecule by converting glutamine to glutamate. PurL transfers the ammonia molecule to FGAR to form FGAM in an ATP-dependent manner. PurS interacts with PurQ and PurL and is thought to assist in the transfer of the ammonia molecule from PurQ to PurL. The protein is Phosphoribosylformylglycinamidine synthase subunit PurQ of Lactobacillus delbrueckii subsp. bulgaricus (strain ATCC 11842 / DSM 20081 / BCRC 10696 / JCM 1002 / NBRC 13953 / NCIMB 11778 / NCTC 12712 / WDCM 00102 / Lb 14).